The primary structure comprises 149 residues: Nucleoside diphosphate kinase (149 aa).

6 residues coordinate ATP: K9, F57, R85, T91, R102, and N112. The active-site Pros-phosphohistidine intermediate is H115.

This sequence belongs to the NDK family. Mg(2+) is required as a cofactor.

It localises to the cytoplasm. The catalysed reaction is a 2'-deoxyribonucleoside 5'-diphosphate + ATP = a 2'-deoxyribonucleoside 5'-triphosphate + ADP. The enzyme catalyses a ribonucleoside 5'-diphosphate + ATP = a ribonucleoside 5'-triphosphate + ADP. In terms of biological role, major role in the synthesis of nucleoside triphosphates other than ATP. The ATP gamma phosphate is transferred to the NDP beta phosphate via a ping-pong mechanism, using a phosphorylated active-site intermediate. The sequence is that of Nucleoside diphosphate kinase from Methanococcoides burtonii (strain DSM 6242 / NBRC 107633 / OCM 468 / ACE-M).